The following is a 301-amino-acid chain: Runt-related transcription factor rnt-1 (301 aa).

The region spanning 10-138 (NFIEQQPAPA…TVDGPRDARI (129 aa)) is the Runt domain. Interaction with DNA stretches follow at residues 40–44 (RSNKS), 95–103 (RFVGRSGRG), and 128–137 (VTVDGPRDAR). Residues arginine 99 and valine 130 each coordinate chloride. The disordered stretch occupies residues 237–301 (PSIFITPTSD…SSSPTIWRPF (65 aa)). Position 255 is a phosphoserine (serine 255). Residues 255–276 (SPRSITKSSETSINLIQETPES) are compositionally biased toward polar residues. Positions 285-301 (VSITSSNSSSPTIWRPF) are enriched in low complexity.

In terms of assembly, interacts with CBFbeta homolog bro-1; acts to increase the affinity and specificity of interaction of rnt-1 with DNA. Interacts with TGF-beta pathway protein sma-4. Post-translationally, may be ubiquitinated in order to be targeted for proteasome-mediated degradation in intestinal cells. In terms of processing, may be phosphorylated by members of the p38 MAP kinase pathway. Expressed in the intestine.

It localises to the nucleus. Its function is as follows. Transcription factor. Binds to regulatory DNA sequences in order to modulate transcription; negatively autoregulates its own expression, perhaps dependent upon CBF beta homolog bro-1. Promotes proliferation, and prevents differentiation, of seam cells, a stem cell-like lineage, acting in concert with bro-1. Required for controlling cell proliferation in the seam cells, perhaps by repressing expression of cyclin-dependent kinase inhibitor cki-1. Inhibition of seam cell differentiation is regulated by rnt-1 and bro-1, perhaps acting upstream of pop-1, by antagonizing pop-1 repressor function. Required for asymmetrical cell divisions in the lineage derived from a posterior embryonic seam cell, the T blast cell, and for asymmetric expression of zinc finger protein tlp-1. Regulates growth and male tail development. Involved in the oxidative stress response, perhaps downstream of the p38 MAP kinase pathway, and acting as part of a negative feedback loop via a transcriptional target gene, tyrosine-protein phosphatase vhp-1. Positively modulates dopaminergic signaling in a non-cell autonomous manner. May be involved in TGF-beta signaling. The polypeptide is Runt-related transcription factor rnt-1 (Caenorhabditis elegans).